Consider the following 53-residue polypeptide: UPF0391 membrane protein BamMC406_6344 (53 aa).

2 consecutive transmembrane segments (helical) span residues 5-25 (AIIFFVIAIIAAVFGFGGIAA) and 30-50 (IAKILFYIFVVIFLVTLLLGV).

This sequence belongs to the UPF0391 family.

The protein resides in the cell membrane. This chain is UPF0391 membrane protein BamMC406_6344, found in Burkholderia ambifaria (strain MC40-6).